The chain runs to 400 residues: tRNA(Ile)-lysidine synthase (400 aa).

Residue 25–30 (SGGVDS) coordinates ATP.

The protein belongs to the tRNA(Ile)-lysidine synthase family.

The protein resides in the cytoplasm. The catalysed reaction is cytidine(34) in tRNA(Ile2) + L-lysine + ATP = lysidine(34) in tRNA(Ile2) + AMP + diphosphate + H(+). In terms of biological role, ligates lysine onto the cytidine present at position 34 of the AUA codon-specific tRNA(Ile) that contains the anticodon CAU, in an ATP-dependent manner. Cytidine is converted to lysidine, thus changing the amino acid specificity of the tRNA from methionine to isoleucine. This chain is tRNA(Ile)-lysidine synthase, found in Francisella philomiragia subsp. philomiragia (strain ATCC 25017 / CCUG 19701 / FSC 153 / O#319-036).